Here is a 68-residue protein sequence, read N- to C-terminus: MVSVKVREGESIEEAIRRFKRECERNGVMQEIKKREFYKTPSILKKEKLAETKRKIRRKMFKDSKWSK.

The protein belongs to the bacterial ribosomal protein bS21 family.

This chain is Small ribosomal subunit protein bS21, found in Endomicrobium trichonymphae.